The sequence spans 476 residues: Ankyrin repeat, SAM and basic leucine zipper domain-containing protein 1 (476 aa).

Phosphoserine is present on residues Ser18 and Ser21. ANK repeat units follow at residues 46–75 (EKNE…SIDS), 79–108 (YGWT…NASF), 111–145 (DKQT…DPNV), 149–178 (RLMT…EVNT), 182–211 (NGYT…DKML), and 215–244 (DGKT…PLEG). The region spanning 273–335 (SYAAFEDLEI…KILAALKELE (63 aa)) is the SAM domain.

In terms of assembly, interacts with DDX4, PIWIL1, RANBP9 and TDRD1.

The protein resides in the cytoplasm. In terms of biological role, plays a central role during spermatogenesis by repressing transposable elements and preventing their mobilization, which is essential for the germline integrity. Acts via the piRNA metabolic process, which mediates the repression of transposable elements during meiosis by forming complexes composed of piRNAs and Piwi proteins and governs the methylation and subsequent repression of transposons. Its association with pi-bodies suggests a participation in the primary piRNAs metabolic process. Required prior to the pachytene stage to facilitate the production of multiple types of piRNAs, including those associated with repeats involved in the regulation of retrotransposons. May act by mediating protein-protein interactions during germ cell maturation. The protein is Ankyrin repeat, SAM and basic leucine zipper domain-containing protein 1 (ASZ1) of Dasypus novemcinctus (Nine-banded armadillo).